A 182-amino-acid polypeptide reads, in one-letter code: Dual-action ribosomal maturation protein DarP (182 aa).

A disordered region spans residues 1 to 25; it reads MEENLADNSEREARPSKTKRKKEMH.

This sequence belongs to the DarP family.

It is found in the cytoplasm. In terms of biological role, member of a network of 50S ribosomal subunit biogenesis factors which assembles along the 30S-50S interface, preventing incorrect 23S rRNA structures from forming. Promotes peptidyl transferase center (PTC) maturation. In Nitrosospira multiformis (strain ATCC 25196 / NCIMB 11849 / C 71), this protein is Dual-action ribosomal maturation protein DarP.